The chain runs to 719 residues: La-related protein 4 (719 aa).

At Met-1 the chain carries N-acetylmethionine. Residues 12 to 21 (TGLNPNAKVW) are interaction with PABPC1. A disordered region spans residues 21–55 (WQEIPSGNPDGTPVTEPSWHETAATSGSHPEGHTE). Residues 107–299 (SSAISTEDLK…PIQTPTQYPS (193 aa)) form an interaction with the poly-A tract of mRNA region. One can recognise an HTH La-type RNA-binding domain in the interval 109 to 198 (AISTEDLKEC…RPSHKRCIVI (90 aa)). Residues 199 to 277 (LREIPETTPV…KAINTFFAKN (79 aa)) enclose the RRM domain. Arg-363 carries the post-translational modification Omega-N-methylarginine. 2 disordered regions span residues 363-398 (RPFP…LSRS) and 437-470 (GRGR…APTP). Residues 376–389 (SSSGSEHSTEGSVS) show a composition bias toward low complexity. Phosphoserine occurs at positions 387 and 396. The span at 439 to 448 (GRRTLFRGRR) shows a compositional bias: basic residues. Over residues 460–470 (PAATEAKAPTP) the composition is skewed to low complexity. Ser-500 carries the phosphoserine modification. Polar residues-rich tracts occupy residues 529–538 (DCTSAPLSIS) and 578–599 (SSPT…SNIN). Disordered regions lie at residues 529 to 562 (DCTS…QMED), 576 to 601 (PVSS…INPP), and 615 to 719 (AEVC…RSPK). Phosphoserine occurs at positions 578, 592, and 642. Position 644 is a phosphothreonine (Thr-644). Basic and acidic residues predominate over residues 654 to 673 (KPVEKPHEKPETRASKDHSG). Omega-N-methylarginine is present on Arg-681. Residue Ser-717 is modified to Phosphoserine.

As to quaternary structure, interacts (via N-terminal region) with PABPC1. Interacts with RACK1.

It is found in the cytoplasm. It localises to the stress granule. The protein localises to the cytosol. Functionally, RNA binding protein that binds to the poly-A tract of mRNA molecules. Associates with the 40S ribosomal subunit and with polysomes. Plays a role in the regulation of mRNA translation. Plays a role in the regulation of cell morphology and cytoskeletal organization. The protein is La-related protein 4 (Larp4) of Mus musculus (Mouse).